A 115-amino-acid polypeptide reads, in one-letter code: MDLIKIAEEAFATKKELPSFKSGDTITVAYRIKEGNKERIQQYRGVVIRISGHGDKKRFTVRKMSENVGVERIFPIESPFIESITVNKVGKVRRAKLYYLRALTGKKARIKEKRV.

This sequence belongs to the bacterial ribosomal protein bL19 family.

Functionally, this protein is located at the 30S-50S ribosomal subunit interface and may play a role in the structure and function of the aminoacyl-tRNA binding site. The protein is Large ribosomal subunit protein bL19 of Parabacteroides distasonis (strain ATCC 8503 / DSM 20701 / CIP 104284 / JCM 5825 / NCTC 11152).